The chain runs to 289 residues: Rhodopsin (289 aa).

Over 1–7 (YLVSPAA) the chain is Extracellular. The helical transmembrane segment at 8 to 32 (YAALGAYMFLLILIGFPVNFLTLYV) threads the bilayer. Topologically, residues 33 to 44 (TLEHKKLRTPLN) are cytoplasmic. A helical membrane pass occupies residues 45–67 (YILLNLAVADLFMVLGGFTTTMY). Topologically, residues 68-81 (TSMHGYFVLGRLGC) are extracellular. A disulfide bond links Cys-81 and Cys-158. A helical transmembrane segment spans residues 82–104 (NLEGFFATLGGEIALWSLVVLAI). A 'Ionic lock' involved in activated form stabilization motif is present at residues 105-107 (ERW). The Cytoplasmic portion of the chain corresponds to 105–123 (ERWIVVCKPISNFRFTEDN). Residues 124–144 (AIMGLAFSWVMALTCAVPPLV) traverse the membrane as a helical segment. The Extracellular segment spans residues 145–173 (GWSRYIPEGMQCSCGVDYYTRAEGFNNES). N-linked (GlcNAc...) asparagine glycosylation is present at Asn-171. The helical transmembrane segment at 174–195 (FVIYMFIVHFPIPLSVIFFCYG) threads the bilayer. Topologically, residues 196-223 (RLLCAVKEAAAAQQESETTQRAEKEVSR) are cytoplasmic. The chain crosses the membrane as a helical span at residues 224–245 (MVVILVIGFLVCWLPYASVAWW). Residues 246 to 257 (IFCNQGSDFGPI) are Extracellular-facing. Residues 258–279 (FMTLPSFFAKRPAIYNPMIYIC) form a helical membrane-spanning segment. Lys-267 is modified (N6-(retinylidene)lysine). Over 280-289 (MNKQFRHCMI) the chain is Cytoplasmic.

Belongs to the G-protein coupled receptor 1 family. Opsin subfamily. Post-translationally, phosphorylated on some or all of the serine and threonine residues present in the C-terminal region. In terms of processing, contains one covalently linked retinal chromophore.

It localises to the membrane. Its subcellular location is the cell projection. The protein localises to the cilium. The protein resides in the photoreceptor outer segment. Its function is as follows. Photoreceptor required for image-forming vision at low light intensity. While most salt water fish species use retinal as chromophore, most freshwater fish use 3-dehydroretinal, or a mixture of retinal and 3-dehydroretinal. Light-induced isomerization of 11-cis to all-trans retinal triggers a conformational change that activates signaling via G-proteins. Subsequent receptor phosphorylation mediates displacement of the bound G-protein alpha subunit by arrestin and terminates signaling. The chain is Rhodopsin (rho) from Batrachocottus multiradiatus (Baikal sculpin).